The following is a 199-amino-acid chain: dITP/XTP pyrophosphatase (199 aa).

Residue 7–12 participates in substrate binding; that stretch reads TGNAGK. The active-site Proton acceptor is the Asp-68. Asp-68 lines the Mg(2+) pocket. Residues Ser-69, 153 to 156, Lys-176, and 181 to 182 each bind substrate; these read FGYD and HR.

The protein belongs to the HAM1 NTPase family. Homodimer. Requires Mg(2+) as cofactor.

The catalysed reaction is XTP + H2O = XMP + diphosphate + H(+). It carries out the reaction dITP + H2O = dIMP + diphosphate + H(+). The enzyme catalyses ITP + H2O = IMP + diphosphate + H(+). In terms of biological role, pyrophosphatase that catalyzes the hydrolysis of nucleoside triphosphates to their monophosphate derivatives, with a high preference for the non-canonical purine nucleotides XTP (xanthosine triphosphate), dITP (deoxyinosine triphosphate) and ITP. Seems to function as a house-cleaning enzyme that removes non-canonical purine nucleotides from the nucleotide pool, thus preventing their incorporation into DNA/RNA and avoiding chromosomal lesions. The chain is dITP/XTP pyrophosphatase from Halorhodospira halophila (strain DSM 244 / SL1) (Ectothiorhodospira halophila (strain DSM 244 / SL1)).